We begin with the raw amino-acid sequence, 737 residues long: Angiotensin-converting enzyme-like protein Ace3 (737 aa).

An N-terminal signal peptide occupies residues 1 to 23; it reads MNLPWALLLVLLSHRQLLPWLRT. Topologically, residues 24-639 are extracellular; sequence VGETSLNDFY…TDTEPEQAYL (616 aa). A Peptidase M2 domain is found at 32-611; the sequence is FYSEAQAKLF…VKQGDTLGWP (580 aa). Cysteines 146 and 152 form a disulfide. Residues arginine 180 and tyrosine 218 each contribute to the chloride site. A disulfide bridge connects residues cysteine 346 and cysteine 364. The Zn(2+) site is built by histidine 377 and histidine 381. An N-linked (GlcNAc...) asparagine glycan is attached at asparagine 390. Glutamate 405 is a Zn(2+) binding site. 3 residues coordinate chloride: tryptophan 479, arginine 483, and arginine 516. The cysteines at positions 532 and 544 are disulfide-linked. The chain crosses the membrane as a helical span at residues 640 to 660; that stretch reads GQWVLLSMSFFMLVLILALGF. Residues 661–700 are Cytoplasmic-facing; it reads RLHYLEKQLLDEDTMILKTLPYSYFLGIAMEPHQAARKQW. A helical transmembrane segment spans residues 701 to 721; that stretch reads LLLGLCCILMLCCIGLLIRIV. Residues 722-737 lie on the Extracellular side of the membrane; sequence TQNTENTPWMKNEGQS.

It belongs to the peptidase M2 family. In terms of assembly, interacts with IZUMO1. Zn(2+) is required as a cofactor. In terms of tissue distribution, expressed in sperm and testis (at protein level). Expressed in heart and testis. Not detected in kidney, lung, liver, brain, ovary, spleen and thymus.

It localises to the cytoplasmic vesicle. The protein resides in the secretory vesicle. It is found in the acrosome membrane. The sequence is that of Angiotensin-converting enzyme-like protein Ace3 from Mus musculus (Mouse).